The following is a 1305-amino-acid chain: DNA-directed DNA polymerase (1305 aa).

Belongs to the DNA polymerase type-C family.

The enzyme catalyses DNA(n) + a 2'-deoxyribonucleoside 5'-triphosphate = DNA(n+1) + diphosphate. Replicates viral genomic DNA. In Bacillus pumilus (Bacillus mesentericus), this protein is DNA-directed DNA polymerase.